Here is a 133-residue protein sequence, read N- to C-terminus: Hydrogenase maturation factor HypA (133 aa).

H2 lines the Ni(2+) pocket. 4 residues coordinate Zn(2+): C73, C75, C105, and C108.

This sequence belongs to the HypA/HybF family.

Functionally, involved in the maturation of [NiFe] hydrogenases. Required for nickel insertion into the metal center of the hydrogenase. The protein is Hydrogenase maturation factor HypA of Methanosarcina acetivorans (strain ATCC 35395 / DSM 2834 / JCM 12185 / C2A).